The chain runs to 240 residues: uncharacterized protein (240 aa).

An N-terminal signal peptide occupies residues Met-1 to Ser-30.

This is an uncharacterized protein from Methanocaldococcus jannaschii (strain ATCC 43067 / DSM 2661 / JAL-1 / JCM 10045 / NBRC 100440) (Methanococcus jannaschii).